The chain runs to 436 residues: Serine protease hepsin (436 aa).

The disordered stretch occupies residues 1 to 29 (MAKEDEEPGAHRGGSTCSRPQPGKGGRTA). The Cytoplasmic portion of the chain corresponds to 1–38 (MAKEDEEPGAHRGGSTCSRPQPGKGGRTAACCSRPKVA). The helical; Signal-anchor for type II membrane protein transmembrane segment at 39-59 (ALIVGTLLFLTGIGAASWAIV) threads the bilayer. Residues 60–436 (TILLQSDQEP…SEASGMVTQP (377 aa)) lie on the Extracellular side of the membrane. An SRCR domain is found at 73–170 (VQLSPGDSRL…RGRFLTATCQ (98 aa)). 8 disulfides stabilise this stretch: Cys-96/Cys-159, Cys-109/Cys-169, Cys-138/Cys-157, Cys-172/Cys-296, Cys-207/Cys-223, Cys-310/Cys-378, Cys-341/Cys-357, and Cys-368/Cys-400. Residue Asn-131 is glycosylated (N-linked (GlcNAc...) asparagine). Residues 182–424 (IVGGQDSSLG…FREWIFKAIK (243 aa)) enclose the Peptidase S1 domain. Catalysis depends on charge relay system residues His-222 and Asp-276. Catalysis depends on Ser-372, which acts as the Charge relay system.

Belongs to the peptidase S1 family. In terms of tissue distribution, detected in kidney, in thick ascending tubule epithelial cells (at protein level). Detected in kidney and liver.

The protein resides in the apical cell membrane. Its subcellular location is the cell membrane. It localises to the secreted. It catalyses the reaction Cleavage after basic amino-acid residues, with Arg strongly preferred to Lys.. Serine protease that cleaves extracellular substrates, and contributes to the proteolytic processing of growth factors, such as HGF and MST1/HGFL. Plays a role in cell growth and maintenance of cell morphology. Plays a role in the proteolytic processing of ACE2. Mediates the proteolytic cleavage of urinary UMOD that is required for UMOD polymerization. The protein is Serine protease hepsin (Hpn) of Mus musculus (Mouse).